Reading from the N-terminus, the 659-residue chain is Zeaxanthin epoxidase, chloroplastic (659 aa).

The transit peptide at 1–50 (MALLSATAPAKTRFSLFSHEEAQHPHPHALSACCGGGASGKRQRARARVA) directs the protein to the chloroplast. FAD is bound by residues 79-107 (RVLVAGGGIGGLVLALAARRKGYEVTVFE) and 357-370 (TFNWGKGRVTLLGD). Positions 553 to 607 (LSIGSRSDPSNSTASLALPLPQISENHATITCKNKAFYVTDNGSEHGTWITDNEG) constitute an FHA domain.

Requires FAD as cofactor. As to expression, expressed in young microspores.

It is found in the plastid. The protein localises to the chloroplast membrane. It localises to the chloroplast thylakoid membrane. It catalyses the reaction all-trans-zeaxanthin + 4 reduced [2Fe-2S]-[ferredoxin] + 2 O2 + 4 H(+) = all-trans-violaxanthin + 4 oxidized [2Fe-2S]-[ferredoxin] + 2 H2O. Its pathway is plant hormone biosynthesis; abscisate biosynthesis. Its function is as follows. Zeaxanthin epoxidase that plays an important role in the xanthophyll cycle and abscisic acid (ABA) biosynthesis. Converts zeaxanthin into antheraxanthin and subsequently violaxanthin. Required for resistance to osmotic and drought stresses, seed development and dormancy. The sequence is that of Zeaxanthin epoxidase, chloroplastic (ZEP) from Oryza sativa subsp. japonica (Rice).